We begin with the raw amino-acid sequence, 251 residues long: Cell division protein ZapD (251 aa).

The protein belongs to the ZapD family. Interacts with FtsZ.

It localises to the cytoplasm. In terms of biological role, cell division factor that enhances FtsZ-ring assembly. Directly interacts with FtsZ and promotes bundling of FtsZ protofilaments, with a reduction in FtsZ GTPase activity. This is Cell division protein ZapD from Burkholderia cenocepacia (strain HI2424).